Here is a 181-residue protein sequence, read N- to C-terminus: MMRFVYIYILVIYGSYLWFSLGGNMFTINSTNRVASTIAPYACVSDVNLEDKATFLDEHTSIHANDSSLQCFVLNDQHVPQNTLATDVEGYNRGLQERISLEYQPLESIVFLLGTPAVLETKESLSLPVSPDALTQKLLSISSNDECKLSGSTSCTTPASHNPPSGYIAQYRHSAEVFPDE.

A helical membrane pass occupies residues 4-24; it reads FVYIYILVIYGSYLWFSLGGN.

In terms of assembly, interacts with host (human) STAT3.

Its subcellular location is the membrane. It is found in the host cytoplasm. A Salmonella strain-specific effector that induces a host STAT3-dependent anti-inflammatory pathway. In bacteria-infected host cells (human) leads to phosphorylation of host STAT3, at least on 'Tyr-705' and interleukin-10 (IL-10, IL10) production; expressing the gene alone in host cells induces STAT3 phosphorylation and IL-10 production. IL-10 production requires STAT3 in infected cells. Contributes to virulence in mouse infection models. Encoded in only a few S.typhimurium serovars, it may be a specific effector for adaptation to bovine hosts. In Salmonella typhimurium (strain 14028s / SGSC 2262), this protein is Salmonella anti-inflammatory response activator.